The primary structure comprises 618 residues: Dihydroxy-acid dehydratase (618 aa).

Asp81 serves as a coordination point for Mg(2+). Cys122 contacts [2Fe-2S] cluster. Mg(2+)-binding residues include Asp123 and Lys124. Lys124 bears the N6-carboxylysine mark. Cys195 is a [2Fe-2S] cluster binding site. Glu491 is a Mg(2+) binding site. The active-site Proton acceptor is Ser517.

The protein belongs to the IlvD/Edd family. In terms of assembly, homodimer. It depends on [2Fe-2S] cluster as a cofactor. Mg(2+) is required as a cofactor.

The enzyme catalyses (2R)-2,3-dihydroxy-3-methylbutanoate = 3-methyl-2-oxobutanoate + H2O. It carries out the reaction (2R,3R)-2,3-dihydroxy-3-methylpentanoate = (S)-3-methyl-2-oxopentanoate + H2O. Its pathway is amino-acid biosynthesis; L-isoleucine biosynthesis; L-isoleucine from 2-oxobutanoate: step 3/4. The protein operates within amino-acid biosynthesis; L-valine biosynthesis; L-valine from pyruvate: step 3/4. Its function is as follows. Functions in the biosynthesis of branched-chain amino acids. Catalyzes the dehydration of (2R,3R)-2,3-dihydroxy-3-methylpentanoate (2,3-dihydroxy-3-methylvalerate) into 2-oxo-3-methylpentanoate (2-oxo-3-methylvalerate) and of (2R)-2,3-dihydroxy-3-methylbutanoate (2,3-dihydroxyisovalerate) into 2-oxo-3-methylbutanoate (2-oxoisovalerate), the penultimate precursor to L-isoleucine and L-valine, respectively. The protein is Dihydroxy-acid dehydratase of Rhodopseudomonas palustris (strain ATCC BAA-98 / CGA009).